We begin with the raw amino-acid sequence, 204 residues long: Protein GrpE (204 aa).

Residues 1 to 55 (MSSKNNPESETKAKNKWEKVMEAEEEQEEGRGDGSQEMEPHREGLEFPSREKLEG) are disordered. Basic and acidic residues-rich tracts occupy residues 7 to 22 (PESE…KVME) and 29 to 55 (EGRG…KLEG).

The protein belongs to the GrpE family. In terms of assembly, homodimer.

It is found in the cytoplasm. Functionally, participates actively in the response to hyperosmotic and heat shock by preventing the aggregation of stress-denatured proteins, in association with DnaK and GrpE. It is the nucleotide exchange factor for DnaK and may function as a thermosensor. Unfolded proteins bind initially to DnaJ; upon interaction with the DnaJ-bound protein, DnaK hydrolyzes its bound ATP, resulting in the formation of a stable complex. GrpE releases ADP from DnaK; ATP binding to DnaK triggers the release of the substrate protein, thus completing the reaction cycle. Several rounds of ATP-dependent interactions between DnaJ, DnaK and GrpE are required for fully efficient folding. The chain is Protein GrpE from Coxiella burnetii (strain RSA 331 / Henzerling II).